The sequence spans 927 residues: Solute carrier family 12 protein B0303.11 (927 aa).

Residues 1 to 23 lie on the Cytoplasmic side of the membrane; the sequence is MPSSTASSEDAPITSTAWMNWKD. A helical transmembrane segment spans residues 24–44; sequence VFLKCVQPMLAVVLLLRFSSI. Residues 45-53 are Extracellular-facing; that stretch reads VDEAGFTTT. A helical membrane pass occupies residues 54 to 74; it reads IILVFFTFLVSLVTGWSACTV. At 75 to 95 the chain is on the cytoplasmic side; it reads VSRKSSEVGFVKTMLAYSSTE. The chain crosses the membrane as a helical span at residues 96 to 116; it reads FAISFSIIYLFCLLVATSTFL. Over 117–141 the chain is Extracellular; sequence TSAAEAVLHIFSTFSLELLDGATHD. A helical membrane pass occupies residues 142 to 159; sequence LRLVSSVLSLITLALCMV. At 160–165 the chain is on the cytoplasmic side; the sequence is RNRNAR. Residues 166–186 form a helical membrane-spanning segment; that stretch reads FVRTFIFALTCIAIALQLSSV. Residues 187-212 lie on the Extracellular side of the membrane; the sequence is MFRYGEYQLRRVSDRNAMIPSPPNEE. Residues 213-233 form a helical membrane-spanning segment; sequence ISTIFAQLFPAAMCGLTILNI. Residues 234 to 244 lie on the Cytoplasmic side of the membrane; the sequence is GSKLQNTAPRG. A helical transmembrane segment spans residues 245-265; the sequence is ALIAIAVSACFYGAAAMLDYV. The Extracellular segment spans residues 266-284; sequence EFFARTSTSNSTGSAEYNE. N-linked (GlcNAc...) asparagine glycosylation is present at Asn275. Residues 285–305 form a helical membrane-spanning segment; sequence FLSYIYTTVPMAIVITLACVL. The Cytoplasmic segment spans residues 306 to 345; that stretch reads SAVSTLKYAAVILQSLGRSNQCRCILWLAKGFGERDIPIR. A helical transmembrane segment spans residues 346 to 366; that stretch reads CLLLLSTVQILVSAIGSYDIL. Position 367 (Cys367) is a topological domain, extracellular. A helical membrane pass occupies residues 368–388; it reads IPTTVFYLFAYALFNFYVFLV. Residues 389–394 lie on the Cytoplasmic side of the membrane; it reads KLSDPE. Residues 395 to 415 traverse the membrane as a helical segment; sequence IPSPPTLLSLAISAACFIASL. Residues 416-419 are Extracellular-facing; the sequence is YTNR. A helical transmembrane segment spans residues 420-440; that stretch reads HLALFIASIFAISYCSLLYII. Residues 441 to 927 are Cytoplasmic-facing; it reads RRERNEDGEE…SMSALRLKFP (487 aa).

The protein belongs to the SLC12A transporter family.

It localises to the cell membrane. In Caenorhabditis elegans, this protein is Solute carrier family 12 protein B0303.11.